The sequence spans 108 residues: UPF0060 membrane protein YnfA (108 aa).

Topologically, residues 1–5 (MIKTT) are periplasmic. A helical transmembrane segment spans residues 6–26 (LLFFATALCEIIGCFLPWLWL). Over 27-30 (KRNA) the chain is Cytoplasmic. A helical membrane pass occupies residues 31 to 51 (SIWLLLPAGISLALFVWLLTL). At 52–60 (HPAASGRIY) the chain is on the periplasmic side. Residues 61–81 (AAYGGVYVCTALMWLRVVDGV) form a helical membrane-spanning segment. Over 82 to 84 (KLT) the chain is Cytoplasmic. Residues 85–105 (LYDWTGALIALCGMLIIVAGW) traverse the membrane as a helical segment. The Periplasmic segment spans residues 106–108 (GRT).

The protein belongs to the UPF0060 family.

The protein resides in the cell inner membrane. The polypeptide is UPF0060 membrane protein YnfA (Shigella dysenteriae serotype 1 (strain Sd197)).